The following is a 367-amino-acid chain: CCN family member 4 (367 aa).

Positions 1–22 (MRWLLPWTLAAVAVLRVGNILA) are cleaved as a signal peptide. Residues 45 to 118 (RPEFCKWPCE…RYAIGVCAQV (74 aa)) enclose the IGFBP N-terminal domain. Cystine bridges form between Cys-49–Cys-73, Cys-53–Cys-75, Cys-55–Cys-76, and Cys-62–Cys-79. A glycan (N-linked (GlcNAc...) asparagine) is linked at Asn-86. 2 cysteine pairs are disulfide-bonded: Cys-87-Cys-101 and Cys-93-Cys-115. One can recognise a VWFC domain in the interval 121–186 (VGCVLDGVRY…GQCCEQWVCD (66 aa)). Asn-143 is a glycosylation site (N-linked (GlcNAc...) asparagine). In terms of domain architecture, TSP type-1 spans 215 to 260 (NCIAYTSPWSPCSTTCGLGISTRISNVNARCWPEQESRLCNLRPCD). Cystine bridges form between Cys-273–Cys-310, Cys-290–Cys-324, Cys-301–Cys-340, Cys-304–Cys-342, and Cys-309–Cys-346. The CTCK domain maps to 273-347 (CLAVYQPEEA…NACFCNLSCR (75 aa)). The N-linked (GlcNAc...) asparagine glycan is linked to Asn-284. Asn-343 is a glycosylation site (N-linked (GlcNAc...) asparagine).

Belongs to the CCN family. Highly expressed in kidney and lung. Lower levels in heart, brain, spleen, liver, skeletal muscle and testis. Expressed in low metastatic melanoma cells.

The protein localises to the secreted. Its function is as follows. Downstream regulator in the Wnt/Frizzled-signaling pathway. Associated with cell survival. Adheres to skin and melanoma fibroblasts. In vitro binding to skin fibroblasts occurs through the proteoglycans, decorin and biglycan. Suppresses tumor growth in vivo. The protein is CCN family member 4 (Ccn4) of Mus musculus (Mouse).